We begin with the raw amino-acid sequence, 420 residues long: 4-hydroxy-3-methylbut-2-en-1-yl diphosphate synthase (flavodoxin) (420 aa).

Cys307, Cys310, Cys353, and Glu360 together coordinate [4Fe-4S] cluster.

Belongs to the IspG family. The cofactor is [4Fe-4S] cluster.

It carries out the reaction (2E)-4-hydroxy-3-methylbut-2-enyl diphosphate + oxidized [flavodoxin] + H2O + 2 H(+) = 2-C-methyl-D-erythritol 2,4-cyclic diphosphate + reduced [flavodoxin]. It participates in isoprenoid biosynthesis; isopentenyl diphosphate biosynthesis via DXP pathway; isopentenyl diphosphate from 1-deoxy-D-xylulose 5-phosphate: step 5/6. Functionally, converts 2C-methyl-D-erythritol 2,4-cyclodiphosphate (ME-2,4cPP) into 1-hydroxy-2-methyl-2-(E)-butenyl 4-diphosphate. The protein is 4-hydroxy-3-methylbut-2-en-1-yl diphosphate synthase (flavodoxin) of Brucella suis biovar 1 (strain 1330).